Reading from the N-terminus, the 300-residue chain is Dihydroorotate dehydrogenase B (NAD(+)), catalytic subunit (300 aa).

Residues Ser20 and 44–45 (KG) each bind FMN. Residues Lys44 and 68–72 (NSVGL) each bind substrate. Asn98 and Asn124 together coordinate FMN. Asn124 lines the substrate pocket. Catalysis depends on Cys127, which acts as the Nucleophile. FMN contacts are provided by Lys162 and Ile188. Residue 189–190 (NT) coordinates substrate. FMN contacts are provided by residues Gly214, 240 to 241 (GG), and 262 to 263 (GT).

It belongs to the dihydroorotate dehydrogenase family. Type 1 subfamily. As to quaternary structure, heterotetramer of 2 PyrK and 2 PyrD type B subunits. FMN is required as a cofactor.

It is found in the cytoplasm. The enzyme catalyses (S)-dihydroorotate + NAD(+) = orotate + NADH + H(+). It participates in pyrimidine metabolism; UMP biosynthesis via de novo pathway; orotate from (S)-dihydroorotate (NAD(+) route): step 1/1. Catalyzes the conversion of dihydroorotate to orotate with NAD(+) as electron acceptor. The polypeptide is Dihydroorotate dehydrogenase B (NAD(+)), catalytic subunit (pyrD) (Caldicellulosiruptor bescii (strain ATCC BAA-1888 / DSM 6725 / KCTC 15123 / Z-1320) (Anaerocellum thermophilum)).